The sequence spans 616 residues: tRNA uridine 5-carboxymethylaminomethyl modification enzyme MnmG (616 aa).

Residues 10–15, V122, and S177 each bind FAD; that span reads GAGHAG. NAD(+) is bound at residue 271 to 285; the sequence is GPRYCPSIEDKVVRF. Q368 lines the FAD pocket.

Belongs to the MnmG family. In terms of assembly, homodimer. Heterotetramer of two MnmE and two MnmG subunits. Requires FAD as cofactor.

It is found in the cytoplasm. Its function is as follows. NAD-binding protein involved in the addition of a carboxymethylaminomethyl (cmnm) group at the wobble position (U34) of certain tRNAs, forming tRNA-cmnm(5)s(2)U34. This chain is tRNA uridine 5-carboxymethylaminomethyl modification enzyme MnmG, found in Malacoplasma penetrans (strain HF-2) (Mycoplasma penetrans).